Reading from the N-terminus, the 275-residue chain is LexA repressor (275 aa).

Positions 1–50 (MKRSTPRPARSQAALTTSSEESPDRVERGGDGVATVTDFPDGPPDETGLT) are disordered. The H-T-H motif DNA-binding region spans 73–93 (MREIGEAVGLTSTSSVAHQLM). The interval 114 to 151 (RSAESAVPDASAGHSPAADRAPSARRPPRGPSPIDSNP) is disordered. Residues S199 and K236 each act as for autocatalytic cleavage activity in the active site.

Belongs to the peptidase S24 family. In terms of assembly, homodimer.

It catalyses the reaction Hydrolysis of Ala-|-Gly bond in repressor LexA.. In terms of biological role, represses a number of genes involved in the response to DNA damage (SOS response), including recA and lexA. In the presence of single-stranded DNA, RecA interacts with LexA causing an autocatalytic cleavage which disrupts the DNA-binding part of LexA, leading to derepression of the SOS regulon and eventually DNA repair. In Acidothermus cellulolyticus (strain ATCC 43068 / DSM 8971 / 11B), this protein is LexA repressor.